The primary structure comprises 65 residues: Large ribosomal subunit protein bL33c (65 aa).

Belongs to the bacterial ribosomal protein bL33 family.

It localises to the plastid. This Aneura mirabilis (Parasitic liverwort) protein is Large ribosomal subunit protein bL33c.